We begin with the raw amino-acid sequence, 398 residues long: 4-hydroxy-3-methylbut-2-en-1-yl diphosphate synthase (ferredoxin) (398 aa).

[4Fe-4S] cluster is bound by residues Cys-306, Cys-309, Cys-340, and Glu-347.

It belongs to the IspG family. It depends on [4Fe-4S] cluster as a cofactor.

The catalysed reaction is (2E)-4-hydroxy-3-methylbut-2-enyl diphosphate + 2 oxidized [2Fe-2S]-[ferredoxin] + H2O = 2-C-methyl-D-erythritol 2,4-cyclic diphosphate + 2 reduced [2Fe-2S]-[ferredoxin] + H(+). It functions in the pathway isoprenoid biosynthesis; isopentenyl diphosphate biosynthesis via DXP pathway; isopentenyl diphosphate from 1-deoxy-D-xylulose 5-phosphate: step 5/6. In terms of biological role, converts 2C-methyl-D-erythritol 2,4-cyclodiphosphate (ME-2,4cPP) into 1-hydroxy-2-methyl-2-(E)-butenyl 4-diphosphate. The sequence is that of 4-hydroxy-3-methylbut-2-en-1-yl diphosphate synthase (ferredoxin) from Synechococcus sp. (strain CC9605).